Consider the following 280-residue polypeptide: 2-dehydro-3-deoxyphosphooctonate aldolase (280 aa).

This sequence belongs to the KdsA family.

It is found in the cytoplasm. It catalyses the reaction D-arabinose 5-phosphate + phosphoenolpyruvate + H2O = 3-deoxy-alpha-D-manno-2-octulosonate-8-phosphate + phosphate. It functions in the pathway carbohydrate biosynthesis; 3-deoxy-D-manno-octulosonate biosynthesis; 3-deoxy-D-manno-octulosonate from D-ribulose 5-phosphate: step 2/3. The protein operates within bacterial outer membrane biogenesis; lipopolysaccharide biosynthesis. The polypeptide is 2-dehydro-3-deoxyphosphooctonate aldolase (Coxiella burnetii (strain Dugway 5J108-111)).